A 105-amino-acid polypeptide reads, in one-letter code: Defensin-like protein 106 (105 aa).

Positions 1–24 (MANTPKTLIAFVFSVIVIISYVHC) are cleaved as a signal peptide. 4 disulfide bridges follow: cysteine 57/cysteine 94, cysteine 63/cysteine 87, cysteine 73/cysteine 92, and cysteine 77/cysteine 93.

This sequence belongs to the DEFL family.

The protein localises to the secreted. This is Defensin-like protein 106 from Arabidopsis thaliana (Mouse-ear cress).